Consider the following 716-residue polypeptide: DEAD-box ATP-dependent RNA helicase 31 (716 aa).

Residues 99 to 188 form a disordered region; that stretch reads GILKSDDEDE…LRLEDESSDE (90 aa). The span at 110–121 shows a compositional bias: basic and acidic residues; that stretch reads DRSRGRNQEKRG. A compositionally biased stretch (polar residues) spans 144-153; it reads SRIQGKSSEA. Over residues 155 to 188 the composition is skewed to basic and acidic residues; that stretch reads FRGRKETSFSRDREDEKGLRKREDLRLEDESSDE. The Q motif signature appears at 248-276; that stretch reads TRFDHYPLSPLSLKAIKDAGYETMTVVQE. Residues 279–462 enclose the Helicase ATP-binding domain; it reads LPIILKGKDV…LVALRRDHEF (184 aa). An ATP-binding site is contributed by 292-299; the sequence is AKTGTGKT. Residues 410 to 413 carry the DEAD box motif; the sequence is DEAD. Residues 497 to 643 form the Helicase C-terminal domain; sequence LREHIMGNVD…IDPETVKKVQ (147 aa).

The protein belongs to the DEAD box helicase family.

The enzyme catalyses ATP + H2O = ADP + phosphate + H(+). The chain is DEAD-box ATP-dependent RNA helicase 31 (RH31) from Arabidopsis thaliana (Mouse-ear cress).